Consider the following 254-residue polypeptide: Triosephosphate isomerase (254 aa).

12–14 (NWK) provides a ligand contact to substrate. H99 functions as the Electrophile in the catalytic mechanism. The active-site Proton acceptor is the E169. Residues G175, S214, and 235 to 236 (GG) contribute to the substrate site.

The protein belongs to the triosephosphate isomerase family. Homodimer.

The protein localises to the cytoplasm. The catalysed reaction is D-glyceraldehyde 3-phosphate = dihydroxyacetone phosphate. It functions in the pathway carbohydrate biosynthesis; gluconeogenesis. The protein operates within carbohydrate degradation; glycolysis; D-glyceraldehyde 3-phosphate from glycerone phosphate: step 1/1. Its function is as follows. Involved in the gluconeogenesis. Catalyzes stereospecifically the conversion of dihydroxyacetone phosphate (DHAP) to D-glyceraldehyde-3-phosphate (G3P). This chain is Triosephosphate isomerase, found in Xanthobacter autotrophicus (strain ATCC BAA-1158 / Py2).